The sequence spans 304 residues: Release factor glutamine methyltransferase (304 aa).

D144 and N188 together coordinate S-adenosyl-L-methionine. Residue 188–191 (NPPY) participates in substrate binding.

The protein belongs to the protein N5-glutamine methyltransferase family. PrmC subfamily.

The enzyme catalyses L-glutaminyl-[peptide chain release factor] + S-adenosyl-L-methionine = N(5)-methyl-L-glutaminyl-[peptide chain release factor] + S-adenosyl-L-homocysteine + H(+). Its function is as follows. Methylates the class 1 translation termination release factors RF1/PrfA and RF2/PrfB on the glutamine residue of the universally conserved GGQ motif. This Mycobacterium tuberculosis (strain CDC 1551 / Oshkosh) protein is Release factor glutamine methyltransferase.